Reading from the N-terminus, the 148-residue chain is Deoxyuridine 5'-triphosphate nucleotidohydrolase (148 aa).

Residues 68–70, Asn81, 85–87, and Lys95 each bind substrate; these read RSG and TID.

The protein belongs to the dUTPase family. Requires Mg(2+) as cofactor.

It catalyses the reaction dUTP + H2O = dUMP + diphosphate + H(+). The protein operates within pyrimidine metabolism; dUMP biosynthesis; dUMP from dCTP (dUTP route): step 2/2. Its function is as follows. This enzyme is involved in nucleotide metabolism: it produces dUMP, the immediate precursor of thymidine nucleotides and it decreases the intracellular concentration of dUTP so that uracil cannot be incorporated into DNA. This chain is Deoxyuridine 5'-triphosphate nucleotidohydrolase, found in Rickettsia peacockii (strain Rustic).